Here is a 209-residue protein sequence, read N- to C-terminus: Imidazole glycerol phosphate synthase subunit HisH (209 aa).

Residues 1–205 (MIAIIDYGMG…KGVVETWKSS (205 aa)) form the Glutamine amidotransferase type-1 domain. The Nucleophile role is filled by Cys79. Catalysis depends on residues His180 and Glu182.

As to quaternary structure, heterodimer of HisH and HisF.

It localises to the cytoplasm. The catalysed reaction is 5-[(5-phospho-1-deoxy-D-ribulos-1-ylimino)methylamino]-1-(5-phospho-beta-D-ribosyl)imidazole-4-carboxamide + L-glutamine = D-erythro-1-(imidazol-4-yl)glycerol 3-phosphate + 5-amino-1-(5-phospho-beta-D-ribosyl)imidazole-4-carboxamide + L-glutamate + H(+). It carries out the reaction L-glutamine + H2O = L-glutamate + NH4(+). It participates in amino-acid biosynthesis; L-histidine biosynthesis; L-histidine from 5-phospho-alpha-D-ribose 1-diphosphate: step 5/9. IGPS catalyzes the conversion of PRFAR and glutamine to IGP, AICAR and glutamate. The HisH subunit catalyzes the hydrolysis of glutamine to glutamate and ammonia as part of the synthesis of IGP and AICAR. The resulting ammonia molecule is channeled to the active site of HisF. This Bacillus anthracis (strain CDC 684 / NRRL 3495) protein is Imidazole glycerol phosphate synthase subunit HisH.